The chain runs to 357 residues: Cholinesterase 1 (357 aa).

Ser112 functions as the Acyl-ester intermediate in the catalytic mechanism. An intrachain disulfide couples Cys166 to Cys179. Catalysis depends on charge relay system residues Glu244 and His357.

The protein belongs to the type-B carboxylesterase/lipase family.

The catalysed reaction is an acylcholine + H2O = a carboxylate + choline + H(+). The chain is Cholinesterase 1 (CHE1) from Branchiostoma lanceolatum (Common lancelet).